A 423-amino-acid polypeptide reads, in one-letter code: Histidine--tRNA ligase (423 aa).

The protein belongs to the class-II aminoacyl-tRNA synthetase family. As to quaternary structure, homodimer.

The protein resides in the cytoplasm. It carries out the reaction tRNA(His) + L-histidine + ATP = L-histidyl-tRNA(His) + AMP + diphosphate + H(+). The polypeptide is Histidine--tRNA ligase (Orientia tsutsugamushi (strain Boryong) (Rickettsia tsutsugamushi)).